A 979-amino-acid chain; its full sequence is UPF0182 protein MT0070 (979 aa).

The next 7 membrane-spanning stretches (helical) occupy residues 19 to 41 (LVTA…DIYV), 63 to 85 (LAIV…LLAY), 114 to 136 (LFGW…FDWV), 174 to 196 (WLFV…FGGL), 208 to 230 (AARV…AYWL), 261 to 280 (LVLV…AIFL), and 285 to 307 (IPAM…WPLL). Positions 894–948 (VFGPGTGRVATXPGGDAASAPPPGAGGPAPPQGVPPPRTTQPPAAPPRGPDVPPA) are disordered. The segment covering 913–946 (APPPGAGGPAPPQGVPPPRTTQPPAAPPRGPDVP) has biased composition (pro residues).

This sequence belongs to the UPF0182 family.

The protein resides in the cell membrane. The sequence is that of UPF0182 protein MT0070 from Mycobacterium tuberculosis (strain CDC 1551 / Oshkosh).